We begin with the raw amino-acid sequence, 911 residues long: Nitrate reductase [NADH] (911 aa).

Residues 1 to 10 (MAASVENRQY) show a composition bias toward polar residues. The disordered stretch occupies residues 1–71 (MAASVENRQY…SEDEDDDDEK (71 aa)). Positions 61–71 (SSEDEDDDDEK) are enriched in acidic residues. Position 188 (Cys-188) interacts with Mo-molybdopterin. The 76-residue stretch at 536–611 (SKMYSMSEVR…LEDFRIGELI (76 aa)) folds into the Cytochrome b5 heme-binding domain. The heme site is built by His-571 and His-594. In terms of domain architecture, FAD-binding FR-type spans 654 to 766 (REKIPCKLVD…KGPLGHIEYQ (113 aa)). FAD-binding positions include 706-709 (RAYT), 723-727 (VVKIY), Phe-728, Phe-735, 740-742 (QMS), and Thr-793.

The protein belongs to the nitrate reductase family. Homodimer. FAD is required as a cofactor. Requires heme as cofactor. It depends on Mo-molybdopterin as a cofactor.

The enzyme catalyses nitrite + NAD(+) + H2O = nitrate + NADH + H(+). Its function is as follows. Nitrate reductase is a key enzyme involved in the first step of nitrate assimilation in plants, fungi and bacteria. The polypeptide is Nitrate reductase [NADH] (NIA) (Solanum lycopersicum (Tomato)).